Consider the following 424-residue polypeptide: Zinc finger and BTB domain-containing protein 6 (424 aa).

One can recognise a BTB domain in the interval 33 to 97 (CDVSIYINDT…CYTGALEVKR (65 aa)). Residue serine 202 is modified to Phosphoserine. 4 consecutive C2H2-type zinc fingers follow at residues 301–323 (HQCP…LKMH), 326–348 (FLCL…IRGH), 354–376 (FQCT…LNIH), and 382–405 (YKCH…TSVH). Residues 402 to 424 (TSVHGRSSGEKLSRPDLKRQSLL) form a disordered region. Over residues 408 to 424 (SSGEKLSRPDLKRQSLL) the composition is skewed to basic and acidic residues.

As to expression, widely expressed with highest levels in brain.

Its subcellular location is the nucleus. Functionally, may be involved in transcriptional regulation. The protein is Zinc finger and BTB domain-containing protein 6 (ZBTB6) of Homo sapiens (Human).